Consider the following 618-residue polypeptide: 2-succinyl-5-enolpyruvyl-6-hydroxy-3-cyclohexene-1-carboxylate synthase (618 aa).

Positions D192 to D215 are disordered.

This sequence belongs to the TPP enzyme family. MenD subfamily. Homodimer. The cofactor is Mg(2+). Mn(2+) serves as cofactor. Requires thiamine diphosphate as cofactor.

The enzyme catalyses isochorismate + 2-oxoglutarate + H(+) = 5-enolpyruvoyl-6-hydroxy-2-succinyl-cyclohex-3-ene-1-carboxylate + CO2. The protein operates within quinol/quinone metabolism; 1,4-dihydroxy-2-naphthoate biosynthesis; 1,4-dihydroxy-2-naphthoate from chorismate: step 2/7. Its pathway is quinol/quinone metabolism; menaquinone biosynthesis. Catalyzes the thiamine diphosphate-dependent decarboxylation of 2-oxoglutarate and the subsequent addition of the resulting succinic semialdehyde-thiamine pyrophosphate anion to isochorismate to yield 2-succinyl-5-enolpyruvyl-6-hydroxy-3-cyclohexene-1-carboxylate (SEPHCHC). This chain is 2-succinyl-5-enolpyruvyl-6-hydroxy-3-cyclohexene-1-carboxylate synthase, found in Halorubrum lacusprofundi (strain ATCC 49239 / DSM 5036 / JCM 8891 / ACAM 34).